The primary structure comprises 444 residues: tRNA-2-methylthio-N(6)-dimethylallyladenosine synthase (444 aa).

Residues 6–124 enclose the MTTase N-terminal domain; the sequence is KTFKIITYGC…LPQLIEEIKA (119 aa). Residues cysteine 15, cysteine 51, cysteine 85, cysteine 161, cysteine 165, and cysteine 168 each contribute to the [4Fe-4S] cluster site. Positions 147–377 constitute a Radical SAM core domain; sequence RARGAQAFVT…MELQNSISLA (231 aa). Positions 380 to 443 constitute a TRAM domain; that stretch reads EALVGQEVEV…TWLLKGEMVD (64 aa).

It belongs to the methylthiotransferase family. MiaB subfamily. As to quaternary structure, monomer. [4Fe-4S] cluster is required as a cofactor.

The protein resides in the cytoplasm. It carries out the reaction N(6)-dimethylallyladenosine(37) in tRNA + (sulfur carrier)-SH + AH2 + 2 S-adenosyl-L-methionine = 2-methylsulfanyl-N(6)-dimethylallyladenosine(37) in tRNA + (sulfur carrier)-H + 5'-deoxyadenosine + L-methionine + A + S-adenosyl-L-homocysteine + 2 H(+). In terms of biological role, catalyzes the methylthiolation of N6-(dimethylallyl)adenosine (i(6)A), leading to the formation of 2-methylthio-N6-(dimethylallyl)adenosine (ms(2)i(6)A) at position 37 in tRNAs that read codons beginning with uridine. The protein is tRNA-2-methylthio-N(6)-dimethylallyladenosine synthase of Moorella thermoacetica (strain ATCC 39073 / JCM 9320).